A 722-amino-acid chain; its full sequence is Metal transporter cnnm-5 (722 aa).

The N-terminal stretch at 1-17 (MSLFLFAIFQLALGSPG) is a signal peptide. The Extracellular segment spans residues 18–139 (APNGPNVPLQ…AAAAKYMGDE (122 aa)). 2 N-linked (GlcNAc...) asparagine glycosylation sites follow: N102 and N114. The region spanning 132–318 (AAKYMGDEIV…AQNEREKTIL (187 aa)) is the CNNM transmembrane domain. Residues 140–160 (IVFCFFCILMSAYASGMTLGY) traverse the membrane as a helical segment. The Cytoplasmic portion of the chain corresponds to 161 to 196 (MKFSMIDLNTMLKIAEGDAAKKRVRRIMHFRRRSTQ). A helical transmembrane segment spans residues 197-217 (LVVTFSLFSSVFTVLFTTTCE). Topologically, residues 218 to 227 (KMLHGVSNED) are extracellular. Residues 228-248 (VLKMAVPALICLIFAEMIPQA) form a helical membrane-spanning segment. The Cytoplasmic segment spans residues 249–257 (VCNSKFGFN). A helical transmembrane segment spans residues 258-278 (LAASLWFVTVIIFFVTLPIAY). The Extracellular portion of the chain corresponds to 279-722 (PASLVLGRFL…ETTPFMEKQE (444 aa)). Residues N320, N349, and N371 are each glycosylated (N-linked (GlcNAc...) asparagine). CBS domains lie at 333–396 (MVPI…LIDE) and 413–473 (TVKF…KIDE). The tract at residues 584 to 607 (SQRSSSTVNSQQHRQQTTDNSRST) is disordered. A glycan (N-linked (GlcNAc...) asparagine) is linked at N639. Residues 686–722 (LNSRASTSTSTTPACRTPLSVDARSQDETTPFMEKQE) are disordered. The segment covering 688–703 (SRASTSTSTTPACRTP) has biased composition (low complexity).

It belongs to the ACDP family.

It localises to the cell membrane. Functionally, probable metal transporter. Probably acts redundantly with the other metal transport proteins cnnm-1, cnnm-2, cnnm-3 and cnnm-4 to regulate Mg(2+) homeostasis. This is Metal transporter cnnm-5 from Caenorhabditis elegans.